The primary structure comprises 295 residues: Ribosomal RNA small subunit methyltransferase A (295 aa).

Positions 33, 35, 60, 81, 111, and 129 each coordinate S-adenosyl-L-methionine.

The protein belongs to the class I-like SAM-binding methyltransferase superfamily. rRNA adenine N(6)-methyltransferase family. RsmA subfamily.

The protein resides in the cytoplasm. The enzyme catalyses adenosine(1518)/adenosine(1519) in 16S rRNA + 4 S-adenosyl-L-methionine = N(6)-dimethyladenosine(1518)/N(6)-dimethyladenosine(1519) in 16S rRNA + 4 S-adenosyl-L-homocysteine + 4 H(+). In terms of biological role, specifically dimethylates two adjacent adenosines (A1518 and A1519) in the loop of a conserved hairpin near the 3'-end of 16S rRNA in the 30S particle. May play a critical role in biogenesis of 30S subunits. This Streptomyces avermitilis (strain ATCC 31267 / DSM 46492 / JCM 5070 / NBRC 14893 / NCIMB 12804 / NRRL 8165 / MA-4680) protein is Ribosomal RNA small subunit methyltransferase A.